The primary structure comprises 133 residues: p53 and DNA damage-regulated protein 1 (133 aa).

This sequence belongs to the prefoldin subunit beta family. Component of the PAQosome complex which is responsible for the biogenesis of several protein complexes and which consists of R2TP complex members RUVBL1, RUVBL2, RPAP3 and PIH1D1, URI complex members PFDN2, PFDN6, PDRG1, UXT and URI1 as well as ASDURF, POLR2E and DNAAF10/WDR92.

The protein resides in the cytoplasm. Its function is as follows. May play a role in chaperone-mediated protein folding. This Bos taurus (Bovine) protein is p53 and DNA damage-regulated protein 1 (PDRG1).